The sequence spans 552 residues: Steroid transmembrane transporter SLC22A24 (552 aa).

The next 12 helical transmembrane spans lie at Phe16–Leu36, Ser146–Leu166, Met174–Pro194, Phe204–Trp224, Thr235–Ile255, Thr260–Val280, Ile349–Phe369, Leu380–Met400, Ile407–Asp427, Ile436–Phe456, Ile473–Ser493, and Tyr495–Leu515.

It belongs to the major facilitator (TC 2.A.1) superfamily. Organic cation transporter (TC 2.A.1.19) family.

It localises to the cell membrane. It catalyses the reaction estrone 3-sulfate(out) + glutarate(in) = estrone 3-sulfate(in) + glutarate(out). The catalysed reaction is 17beta-estradiol 17-O-(beta-D-glucuronate)(out) + glutarate(in) = 17beta-estradiol 17-O-(beta-D-glucuronate)(in) + glutarate(out). The enzyme catalyses 5alpha-androstane-3alpha,17beta-diol 3-O-(beta-D-glucuronate)(out) + glutarate(in) = 5alpha-androstane-3alpha,17beta-diol 3-O-(beta-D-glucuronate)(in) + glutarate(out). It carries out the reaction dehydroepiandrosterone 3-sulfate(out) + glutarate(in) = dehydroepiandrosterone 3-sulfate(in) + glutarate(out). It catalyses the reaction glutarate(in) + succinate(out) = glutarate(out) + succinate(in). Functionally, renal transmembrane organic anion/dicarboxylate exchanger that participates in the reabsorption of conjugated steroids, as well as bile acids, driven by an outward gradient of dicarboxylates such as glutarate or succinate. Transports androstanediol glucuronide (5alpha-androstane-3alpha,17beta-diol 3-O-(beta-D-glucuronate)), estrone 3-sulfate, and estradiol-17-glucuronide (17beta-estradiol 17-O-(beta-D-glucuronate)), but not taurocholate. This Microcebus murinus (Gray mouse lemur) protein is Steroid transmembrane transporter SLC22A24.